The chain runs to 321 residues: Ubiquinone biosynthesis O-methyltransferase, mitochondrial (321 aa).

S-adenosyl-L-methionine-binding residues include R102, G135, D157, and L210. E211, E214, and H215 together coordinate Mg(2+).

It belongs to the class I-like SAM-binding methyltransferase superfamily. UbiG/COQ3 family. In terms of assembly, component of a multi-subunit COQ enzyme complex. It depends on Mg(2+) as a cofactor.

The protein resides in the mitochondrion inner membrane. The enzyme catalyses a 3,4-dihydroxy-5-(all-trans-polyprenyl)benzoate + S-adenosyl-L-methionine = a 4-hydroxy-3-methoxy-5-(all-trans-polyprenyl)benzoate + S-adenosyl-L-homocysteine + H(+). It catalyses the reaction a 3-demethylubiquinone + S-adenosyl-L-methionine = a ubiquinone + S-adenosyl-L-homocysteine. The catalysed reaction is a 3-demethylubiquinol + S-adenosyl-L-methionine = a ubiquinol + S-adenosyl-L-homocysteine + H(+). It functions in the pathway cofactor biosynthesis; ubiquinone biosynthesis. O-methyltransferase required for two non-consecutive steps during ubiquinone biosynthesis. Catalyzes the 2 O-methylation of 3,4-dihydroxy-5-(all-trans-polyprenyl)benzoic acid into 4-hydroxy-3-methoxy-5-(all-trans-polyprenyl)benzoic acid. Also catalyzes the last step of ubiquinone biosynthesis by mediating methylation of 3-demethylubiquinone into ubiquinone. Also able to mediate the methylation of 3-demethylubiquinol into ubiquinol. The sequence is that of Ubiquinone biosynthesis O-methyltransferase, mitochondrial from Dictyostelium discoideum (Social amoeba).